A 144-amino-acid polypeptide reads, in one-letter code: Large ribosomal subunit protein bL31c (144 aa).

Residues 1–48 (MAVSLPNSFLQISPCVPSLQLRKPVMAAVKGGKQSVRRSSNTVVQITC) constitute a chloroplast transit peptide.

It belongs to the bacterial ribosomal protein bL31 family. Type A subfamily. As to quaternary structure, part of the 50S ribosomal subunit.

The protein localises to the plastid. It localises to the chloroplast. Functionally, binds the 23S rRNA. The protein is Large ribosomal subunit protein bL31c (RPL31) of Arabidopsis thaliana (Mouse-ear cress).